We begin with the raw amino-acid sequence, 261 residues long: Tyrosine phosphatase-like protein H5 (261 aa).

Positions 26–261 constitute a Tyrosine-protein phosphatase domain; that stretch reads LIKKEHDKVL…ESVEQEYFVP (236 aa).

The protein belongs to the protein-tyrosine phosphatase family.

The protein is Tyrosine phosphatase-like protein H5 (H6) of Microplitis demolitor bracovirus (isolate Webb) (MdBV).